The sequence spans 329 residues: Carbohydrate sulfotransferase chst-1 (329 aa).

Over 1–3 (MLK) the chain is Cytoplasmic. The helical; Signal-anchor for type II membrane protein transmembrane segment at 4 to 23 (WFIISCCLLTAISYSTYYLF) threads the bilayer. Residues 24-329 (TSNSWIKTVK…FDFDTTFINS (306 aa)) are Lumenal-facing. Residues 91-97 (KKSMSTL) and 157-165 (RDPIARFIS) contribute to the 3'-phosphoadenylyl sulfate site.

Belongs to the sulfotransferase 2 family. In terms of tissue distribution, highly expressed in the head and tail of hermaphrodites, in particular in amphid and phasmid sheath cells.

It is found in the golgi apparatus membrane. It catalyses the reaction chondroitin beta-D-glucuronate + n 3'-phosphoadenylyl sulfate = chondroitin 4'-sulfate + n adenosine 3',5'-bisphosphate + n H(+). Its function is as follows. Catalyzes the transfer of sulfate to position 4 of non-reducing N-acetylgalactosamine (GalNAc) residue of chondroitin. The sequence is that of Carbohydrate sulfotransferase chst-1 from Caenorhabditis elegans.